We begin with the raw amino-acid sequence, 209 residues long: Glycerol-3-phosphate acyltransferase (209 aa).

5 consecutive transmembrane segments (helical) span residues 13 to 33 (ALIA…GLLL), 63 to 83 (LAAA…LIAQ), 94 to 114 (PGLL…WLGF), 127 to 147 (LLGI…SIAF), and 151 to 171 (YSSL…WILG).

It belongs to the PlsY family. In terms of assembly, probably interacts with PlsX.

Its subcellular location is the cell inner membrane. The enzyme catalyses an acyl phosphate + sn-glycerol 3-phosphate = a 1-acyl-sn-glycero-3-phosphate + phosphate. It participates in lipid metabolism; phospholipid metabolism. In terms of biological role, catalyzes the transfer of an acyl group from acyl-phosphate (acyl-PO(4)) to glycerol-3-phosphate (G3P) to form lysophosphatidic acid (LPA). This enzyme utilizes acyl-phosphate as fatty acyl donor, but not acyl-CoA or acyl-ACP. The polypeptide is Glycerol-3-phosphate acyltransferase (Allorhizobium ampelinum (strain ATCC BAA-846 / DSM 112012 / S4) (Agrobacterium vitis (strain S4))).